A 311-amino-acid polypeptide reads, in one-letter code: MDASLPAHMRPERSFQGFILALQRFWAEQGCVILQPYDMEMGAGTFHPATTLRALGPKPWNAAYVQPSRRPKDGRYGENPNRMQHYYQFQVIMKPSPPNLQELYLKSLAAIGIDSAVHDIRFVEDDWESPTLGAWGLGWECWCDGMEVSQFTYFQQVAGFECAPVAGELTYGLERLAMYVQGVDRVYDLNFNGRDGDAKVTYGDVFLQAEREYSKHNFEVADTAMLFEQFKMAEAACRKYLDAGWREGNRKEHLMALPAYDQCIKASHVFNLLDARGVISVTERQSYILRVRELAKACGEAWIHTEAGGAA.

It belongs to the class-II aminoacyl-tRNA synthetase family. As to quaternary structure, tetramer of two alpha and two beta subunits.

Its subcellular location is the cytoplasm. It carries out the reaction tRNA(Gly) + glycine + ATP = glycyl-tRNA(Gly) + AMP + diphosphate. The protein is Glycine--tRNA ligase alpha subunit of Bradyrhizobium diazoefficiens (strain JCM 10833 / BCRC 13528 / IAM 13628 / NBRC 14792 / USDA 110).